Reading from the N-terminus, the 305-residue chain is Heme A synthase (305 aa).

At 1–6 the chain is on the cytoplasmic side; sequence MKKFLK. Residues 7-27 form a helical membrane-spanning segment; it reads VWSVLTIICMTVVVFGGALVT. Over 28–63 the chain is Extracellular; sequence KTGSADGCGNSWPLCNGQLVRLTDVTPEKLIEFMHR. Cys-35 and Cys-42 are oxidised to a cystine. Residue Glu-59 is part of the active site. His-62 provides a ligand contact to heme o. Residues 64–84 form a helical membrane-spanning segment; that stretch reads MTTGISSIFVIVLAICAWIYM. Topologically, residues 85 to 92 are cytoplasmic; it reads KNRRETKP. The chain crosses the membrane as a helical span at residues 93–113; it reads LAIIAVLFLIIQALMGMAAVV. Residues 114–122 are Extracellular-facing; it reads WGQNPYIMA. Residues 123 to 143 traverse the membrane as a helical segment; the sequence is LHFGISIICYASIVLLALMIF. Residue His-124 participates in heme o binding. The Cytoplasmic portion of the chain corresponds to 144–160; the sequence is EVDRKFDARNLVMGTKL. A helical transmembrane segment spans residues 161–181; that stretch reads RINIYALTIYTYLAVYTGALV. The Extracellular segment spans residues 182–212; sequence RHEKASMAVPVWPFENGKFIMPDSVQDYVQY. The chain crosses the membrane as a helical span at residues 213-233; sequence FHRVAAFILIVWLLYVTWLVF. His-214 contacts heme b. Residues 234–240 are Cytoplasmic-facing; sequence RDYRRYR. A helical membrane pass occupies residues 241 to 261; it reads VLTFSMVLSLLFIALQAVTGA. Topologically, residues 262–271 are extracellular; sequence LSVYTGVNLY. Residues 272–292 form a helical membrane-spanning segment; sequence IALAHSLIITMLFALLCYLCL. Residue His-276 participates in heme b binding. Residues 293 to 305 are Cytoplasmic-facing; that stretch reads LASRSKSNRLRIK.

Belongs to the COX15/CtaA family. Type 1 subfamily. As to quaternary structure, interacts with CtaB. The cofactor is heme b.

The protein resides in the cell membrane. The enzyme catalyses Fe(II)-heme o + 2 A + H2O = Fe(II)-heme a + 2 AH2. The protein operates within porphyrin-containing compound metabolism; heme A biosynthesis; heme A from heme O: step 1/1. In terms of biological role, catalyzes the conversion of heme O to heme A by two successive hydroxylations of the methyl group at C8. The first hydroxylation forms heme I, the second hydroxylation results in an unstable dihydroxymethyl group, which spontaneously dehydrates, resulting in the formyl group of heme A. This chain is Heme A synthase, found in Listeria welshimeri serovar 6b (strain ATCC 35897 / DSM 20650 / CCUG 15529 / CIP 8149 / NCTC 11857 / SLCC 5334 / V8).